The chain runs to 115 residues: uncharacterized protein (115 aa).

3 consecutive transmembrane segments (helical) span residues T7–D27, Y40–A60, and I72–L92.

Its subcellular location is the cell membrane. This is an uncharacterized protein from Haemophilus influenzae (strain ATCC 51907 / DSM 11121 / KW20 / Rd).